A 162-amino-acid polypeptide reads, in one-letter code: Beta-carotene hydroxylase (162 aa).

The region spanning 8–135 (VATVLVMELT…GRDHCVSFGF (128 aa)) is the Fatty acid hydroxylase domain.

This sequence belongs to the sterol desaturase family.

It carries out the reaction all-trans-beta-carotene + 4 reduced [2Fe-2S]-[ferredoxin] + 2 O2 + 4 H(+) = all-trans-zeaxanthin + 4 oxidized [2Fe-2S]-[ferredoxin] + 2 H2O. It participates in carotenoid biosynthesis; astaxanthin biosynthesis. Its function is as follows. Catalyzes the hydroxylation reaction from beta-carotene to zeaxanthin via beta-cryptoxanthin. The polypeptide is Beta-carotene hydroxylase (crtZ) (Paracoccus sp. (strain N81106 / MBIC 01143) (Agrobacterium aurantiacum)).